Consider the following 190-residue polypeptide: Shikimate kinase (190 aa).

Glycine 13 to threonine 18 contributes to the ATP binding site. Residue threonine 17 coordinates Mg(2+). Substrate is bound by residues aspartate 35, arginine 59, and glycine 81. Arginine 119 contacts ATP. Arginine 138 contributes to the substrate binding site. Glutamine 155 contacts ATP.

It belongs to the shikimate kinase family. In terms of assembly, monomer. Mg(2+) is required as a cofactor.

It is found in the cytoplasm. It carries out the reaction shikimate + ATP = 3-phosphoshikimate + ADP + H(+). Its pathway is metabolic intermediate biosynthesis; chorismate biosynthesis; chorismate from D-erythrose 4-phosphate and phosphoenolpyruvate: step 5/7. Its function is as follows. Catalyzes the specific phosphorylation of the 3-hydroxyl group of shikimic acid using ATP as a cosubstrate. This is Shikimate kinase from Nitrosococcus oceani (strain ATCC 19707 / BCRC 17464 / JCM 30415 / NCIMB 11848 / C-107).